A 389-amino-acid polypeptide reads, in one-letter code: Putative F-box/kelch-repeat protein At4g35120 (389 aa).

The F-box domain maps to 24–70 (SMSISSLPDEIVLSFLALISKSYYRSLSLVSKSFYSLLSSTEIYAAR). 3 Kelch repeats span residues 128 to 174 (EIYK…FLDG), 176 to 225 (IYVI…AVSG), and 227 to 273 (RLYV…MKPI).

In Arabidopsis thaliana (Mouse-ear cress), this protein is Putative F-box/kelch-repeat protein At4g35120.